The primary structure comprises 271 residues: NADPH-dependent 7-cyano-7-deazaguanine reductase (271 aa).

81–83 (IES) contacts substrate. 83–84 (SK) contributes to the NADPH binding site. The active-site Thioimide intermediate is the Cys-177. The Proton donor role is filled by Asp-184. A substrate-binding site is contributed by 216–217 (HE). 245–246 (RG) is an NADPH binding site.

The protein belongs to the GTP cyclohydrolase I family. QueF type 2 subfamily. As to quaternary structure, homodimer.

It localises to the cytoplasm. It catalyses the reaction 7-aminomethyl-7-carbaguanine + 2 NADP(+) = 7-cyano-7-deazaguanine + 2 NADPH + 3 H(+). It participates in tRNA modification; tRNA-queuosine biosynthesis. Catalyzes the NADPH-dependent reduction of 7-cyano-7-deazaguanine (preQ0) to 7-aminomethyl-7-deazaguanine (preQ1). In Xanthomonas axonopodis pv. citri (strain 306), this protein is NADPH-dependent 7-cyano-7-deazaguanine reductase.